The primary structure comprises 259 residues: MNSDVSSSEHELSQDGSSQNNPSENFVSSSNSNESVNQVELSDNPEVEHQVKNDSVDTAKEQSSTSCESNIKGSDTEARLQQLEKEHETLNSQYMRIAADFDNFRKRQTRDQDDLKIQLTCTTLSEILPIVDNFERARQQLNPEGEEAQALHRSYQGLYKQLVEVLKNLGVAPMRVVDQAFDPSLHEAVMREPSDEKAEDIVIEELQRGYHLNGRVLRHALVKVSMGPGPKAVNEEIPDQSASNQELSESVDGPTKDEN.

2 disordered regions span residues Met1 to Asp75 and Gly227 to Asn259. Over residues Asn20–Glu40 the composition is skewed to low complexity. Positions Glu46–Lys60 are enriched in basic and acidic residues. Positions Glu61–Gly73 are enriched in polar residues.

The protein belongs to the GrpE family. Homodimer.

It localises to the cytoplasm. Functionally, participates actively in the response to hyperosmotic and heat shock by preventing the aggregation of stress-denatured proteins, in association with DnaK and GrpE. It is the nucleotide exchange factor for DnaK and may function as a thermosensor. Unfolded proteins bind initially to DnaJ; upon interaction with the DnaJ-bound protein, DnaK hydrolyzes its bound ATP, resulting in the formation of a stable complex. GrpE releases ADP from DnaK; ATP binding to DnaK triggers the release of the substrate protein, thus completing the reaction cycle. Several rounds of ATP-dependent interactions between DnaJ, DnaK and GrpE are required for fully efficient folding. This is Protein GrpE from Prochlorococcus marinus (strain NATL1A).